A 388-amino-acid polypeptide reads, in one-letter code: Methylthioribose-1-phosphate isomerase (388 aa).

Asp258 (proton donor) is an active-site residue.

It belongs to the eIF-2B alpha/beta/delta subunits family. MtnA subfamily.

The protein localises to the cytoplasm. It localises to the nucleus. It catalyses the reaction 5-(methylsulfanyl)-alpha-D-ribose 1-phosphate = 5-(methylsulfanyl)-D-ribulose 1-phosphate. The protein operates within amino-acid biosynthesis; L-methionine biosynthesis via salvage pathway; L-methionine from S-methyl-5-thio-alpha-D-ribose 1-phosphate: step 1/6. Functionally, catalyzes the interconversion of methylthioribose-1-phosphate (MTR-1-P) into methylthioribulose-1-phosphate (MTRu-1-P). The chain is Methylthioribose-1-phosphate isomerase from Sordaria macrospora (strain ATCC MYA-333 / DSM 997 / K(L3346) / K-hell).